The primary structure comprises 346 residues: D-alanine--D-alanine ligase (346 aa).

The ATP-grasp domain occupies 133-324 (KLYAQSVGVK…IVDNLAKNIE (192 aa)). 159–211 (LSFPCILKPARLGSSIGISIVKDESELKYAKDVAFEFDEDVVVEQFVSNIKEY) serves as a coordination point for ATP. 3 residues coordinate Mg(2+): Asp-284, Glu-296, and Asn-298.

It belongs to the D-alanine--D-alanine ligase family. Requires Mg(2+) as cofactor. Mn(2+) is required as a cofactor.

The protein localises to the cytoplasm. The catalysed reaction is 2 D-alanine + ATP = D-alanyl-D-alanine + ADP + phosphate + H(+). It functions in the pathway cell wall biogenesis; peptidoglycan biosynthesis. Functionally, cell wall formation. The sequence is that of D-alanine--D-alanine ligase from Campylobacter lari (strain RM2100 / D67 / ATCC BAA-1060).